Consider the following 170-residue polypeptide: Peptide deformylase 2 (170 aa).

Positions 94 and 136 each coordinate Fe cation. The active site involves Glu137. His140 contacts Fe cation.

Belongs to the polypeptide deformylase family. The cofactor is Fe(2+).

The catalysed reaction is N-terminal N-formyl-L-methionyl-[peptide] + H2O = N-terminal L-methionyl-[peptide] + formate. Functionally, removes the formyl group from the N-terminal Met of newly synthesized proteins. Requires at least a dipeptide for an efficient rate of reaction. N-terminal L-methionine is a prerequisite for activity but the enzyme has broad specificity at other positions. This chain is Peptide deformylase 2, found in Xanthomonas campestris pv. campestris (strain ATCC 33913 / DSM 3586 / NCPPB 528 / LMG 568 / P 25).